A 131-amino-acid polypeptide reads, in one-letter code: Peptide methionine sulfoxide reductase MsrB (131 aa).

Residues 8-130 (LEEWRAMLDP…NSVCLDLKPR (123 aa)) enclose the MsrB domain. C47, C50, C96, and C99 together coordinate Zn(2+). Catalysis depends on C119, which acts as the Nucleophile.

Belongs to the MsrB Met sulfoxide reductase family. It depends on Zn(2+) as a cofactor.

The catalysed reaction is L-methionyl-[protein] + [thioredoxin]-disulfide + H2O = L-methionyl-(R)-S-oxide-[protein] + [thioredoxin]-dithiol. The polypeptide is Peptide methionine sulfoxide reductase MsrB (Pseudomonas entomophila (strain L48)).